The sequence spans 251 residues: tRNA (guanine-N(7)-)-methyltransferase (251 aa).

4 residues coordinate S-adenosyl-L-methionine: Glu-69, Glu-94, Asp-121, and Asp-143. Asp-143 is a catalytic residue. Residues Lys-147 and Asp-179 each coordinate substrate.

This sequence belongs to the class I-like SAM-binding methyltransferase superfamily. TrmB family.

It carries out the reaction guanosine(46) in tRNA + S-adenosyl-L-methionine = N(7)-methylguanosine(46) in tRNA + S-adenosyl-L-homocysteine. The protein operates within tRNA modification; N(7)-methylguanine-tRNA biosynthesis. In terms of biological role, catalyzes the formation of N(7)-methylguanine at position 46 (m7G46) in tRNA. This is tRNA (guanine-N(7)-)-methyltransferase from Rhodopseudomonas palustris (strain BisB18).